Here is a 111-residue protein sequence, read N- to C-terminus: Nucleoid-associated protein NGK_1136 (111 aa).

Belongs to the YbaB/EbfC family. In terms of assembly, homodimer.

Its subcellular location is the cytoplasm. The protein localises to the nucleoid. Its function is as follows. Binds to DNA and alters its conformation. May be involved in regulation of gene expression, nucleoid organization and DNA protection. In Neisseria gonorrhoeae (strain NCCP11945), this protein is Nucleoid-associated protein NGK_1136.